The chain runs to 217 residues: GRB2-related adapter protein (217 aa).

One can recognise an SH3 1 domain in the interval 1 to 58 (MESVALYSFQATESDELAFNKGDTLKILNMEDDQNWYKAELRGAEGFVPKNYIRLKPH). Positions 60 to 152 (WYSGRISRQL…KRQVFLQDEE (93 aa)) constitute an SH2 domain. In terms of domain architecture, SH3 2 spans 158–217 (PRACFAQAQFDFSAQDPSQLSFRRGDIIEVLERLDPSWWRGRLSGRIGFFPRSYVQPVHM).

It belongs to the GRB2/sem-5/DRK family. As to quaternary structure, associates through its SH2 domain with ligand-activated receptors for stem cell factor (KIT) and erythropoietin (EPOR). Also forms a stable complex with the Bcr-Abl oncoprotein. GRAP is associated with the Ras guanine nucleotide exchange factor SOS1, primarily through its N-terminal SH3 domain. Interacts with phosphorylated LAT upon TCR activation. Interacts with SHB.

Its subcellular location is the membrane. The protein resides in the synapse. Couples signals from receptor and cytoplasmic tyrosine kinases to the Ras signaling pathway. Plays a role in the inner ear and in hearing. The polypeptide is GRB2-related adapter protein (GRAP) (Bos taurus (Bovine)).